Reading from the N-terminus, the 333-residue chain is Leucine carboxyl methyltransferase 1 (333 aa).

Residues Arg79, Gly108, Asp131, 180–181 (NV), and Glu206 contribute to the S-adenosyl-L-methionine site.

Belongs to the methyltransferase superfamily. LCMT family.

It carries out the reaction [phosphatase 2A protein]-C-terminal L-leucine + S-adenosyl-L-methionine = [phosphatase 2A protein]-C-terminal L-leucine methyl ester + S-adenosyl-L-homocysteine. Functionally, methylates the carboxyl group of the C-terminal leucine residue of protein phosphatase 2A catalytic subunits to form alpha-leucine ester residues. The protein is Leucine carboxyl methyltransferase 1 (PPM1) of Kluyveromyces lactis (strain ATCC 8585 / CBS 2359 / DSM 70799 / NBRC 1267 / NRRL Y-1140 / WM37) (Yeast).